Here is a 555-residue protein sequence, read N- to C-terminus: Pentatricopeptide repeat-containing protein At2g44880 (555 aa).

PPR repeat units follow at residues 41–75 (DSFL…TCFA), 77–111 (DNFT…GFCA), 112–142 (DMYV…MPHR), 143–173 (SEVS…MPHV), 175–205 (DVVI…MTHK), 206–240 (TVIT…NLVS), 241–267 (WNTM…MQAT), 273–307 (DDVT…KLDK), 308–342 (KVKV…QVAS), 343–370 (WNAM…MIEE), 373–407 (DEIT…GLNA), and 408–438 (KIEH…MPFE). Residues 443 to 518 (ILSSFLSACG…EVGCSLIEIN (76 aa)) form a type E motif region. The tract at residues 519 to 549 (YIVSEFISGDTTHPHRRSIHLVLGDLLMHMN) is type E(+) motif.

It belongs to the PPR family. PCMP-E subfamily.

This is Pentatricopeptide repeat-containing protein At2g44880 (PCMP-E9) from Arabidopsis thaliana (Mouse-ear cress).